The following is a 181-amino-acid chain: Inner membrane-spanning protein YciB (181 aa).

A run of 5 helical transmembrane segments spans residues 22-42 (IYTA…ILYF), 50-70 (MHLV…AFHD), 72-92 (AFIK…LAVS), 118-138 (VTWY…YVAF), and 148-168 (FKVF…VFYI).

This sequence belongs to the YciB family.

The protein resides in the cell inner membrane. In terms of biological role, plays a role in cell envelope biogenesis, maintenance of cell envelope integrity and membrane homeostasis. This chain is Inner membrane-spanning protein YciB, found in Shewanella denitrificans (strain OS217 / ATCC BAA-1090 / DSM 15013).